The chain runs to 696 residues: Polyribonucleotide nucleotidyltransferase (696 aa).

Mg(2+) contacts are provided by aspartate 483 and aspartate 489. Residues 550–609 form the KH domain; it reads PRITTIWVKVDKIRDVIGSGGKNIRSVTEATGVSIDIDDTGKINIASTNKEACDLAIKMI. The S1 motif domain occupies 619–687; sequence GKLYMGTVKK…KQGKIKLSRK (69 aa).

It belongs to the polyribonucleotide nucleotidyltransferase family. Requires Mg(2+) as cofactor.

It localises to the cytoplasm. The enzyme catalyses RNA(n+1) + phosphate = RNA(n) + a ribonucleoside 5'-diphosphate. In terms of biological role, involved in mRNA degradation. Catalyzes the phosphorolysis of single-stranded polyribonucleotides processively in the 3'- to 5'-direction. The protein is Polyribonucleotide nucleotidyltransferase of Geobacter sp. (strain M21).